A 369-amino-acid polypeptide reads, in one-letter code: Ribosomal RNA large subunit methyltransferase M (369 aa).

Residues serine 198, alanine 231–glycine 234, aspartate 250, aspartate 270, and aspartate 287 each bind S-adenosyl-L-methionine. Catalysis depends on lysine 316, which acts as the Proton acceptor.

The protein belongs to the class I-like SAM-binding methyltransferase superfamily. RNA methyltransferase RlmE family. RlmM subfamily. In terms of assembly, monomer.

The protein resides in the cytoplasm. It carries out the reaction cytidine(2498) in 23S rRNA + S-adenosyl-L-methionine = 2'-O-methylcytidine(2498) in 23S rRNA + S-adenosyl-L-homocysteine + H(+). Functionally, catalyzes the 2'-O-methylation at nucleotide C2498 in 23S rRNA. This chain is Ribosomal RNA large subunit methyltransferase M, found in Idiomarina loihiensis (strain ATCC BAA-735 / DSM 15497 / L2-TR).